The sequence spans 98 residues: Integration host factor subunit alpha (98 aa).

The tract at residues 49–71 is disordered; sequence FGNFDLRDKNQRPGRNPKTGEDI.

Belongs to the bacterial histone-like protein family. As to quaternary structure, heterodimer of an alpha and a beta chain.

In terms of biological role, this protein is one of the two subunits of integration host factor, a specific DNA-binding protein that functions in genetic recombination as well as in transcriptional and translational control. This chain is Integration host factor subunit alpha, found in Shewanella amazonensis (strain ATCC BAA-1098 / SB2B).